The chain runs to 533 residues: Dipeptidase (533 aa).

Cys-3 is an active-site residue.

The protein belongs to the peptidase C69 family.

The enzyme catalyses an L-aminoacyl-L-amino acid + H2O = 2 an L-alpha-amino acid. In terms of biological role, hydrolyzes a wide range of dipeptides. Highest activity against Ala-Gln. In Bifidobacterium longum (strain NCC 2705), this protein is Dipeptidase.